The sequence spans 208 residues: CKLF-like MARVEL transmembrane domain-containing protein 4 (208 aa).

Positions 1 to 11 (MRGGEELDGFE) are enriched in acidic residues. Positions 1-38 (MRGGEELDGFEGEASSTSMISGASSPYQPTTEPVSQRR) are disordered. The segment covering 15-25 (SSTSMISGASS) has biased composition (low complexity). In terms of domain architecture, MARVEL spans 49-176 (YLRGALGRLK…STFLAMQKWR (128 aa)). The next 4 membrane-spanning stretches (helical) occupy residues 59 to 79 (VAQVILALIAFICIETIMECS), 85 to 105 (YFFEFVSCSAFVVTGVLLILF), 123 to 143 (LVNTGLSTFFFFIASIVLAAL), and 151 to 171 (IAAVIFGFLATAAYAVSTFLA). Residue Ser194 is modified to Phosphoserine.

Belongs to the chemokine-like factor family. Interacts with PD1L1 and CMTM6.

Its subcellular location is the membrane. Its function is as follows. Acts as a backup for CMTM6 to regulate plasma membrane expression of PD-L1/CD274, an immune inhibitory ligand critical for immune tolerance to self and antitumor immunity. May protect PD-L1/CD274 from being polyubiquitinated and targeted for degradation. The protein is CKLF-like MARVEL transmembrane domain-containing protein 4 of Mus musculus (Mouse).